Reading from the N-terminus, the 276-residue chain is Checkpoint protein HUS1B (276 aa).

Belongs to the HUS1 family. In terms of assembly, interacts with RAD1 and RAD9B.

In Mus musculus (Mouse), this protein is Checkpoint protein HUS1B (Hus1b).